A 174-amino-acid polypeptide reads, in one-letter code: Small ribosomal subunit protein uS5 (174 aa).

Positions 16–79 constitute an S5 DRBM domain; that stretch reads LSELLVSVRR…NAAKKSMIRV (64 aa).

It belongs to the universal ribosomal protein uS5 family. Part of the 30S ribosomal subunit. Contacts proteins S4 and S8.

With S4 and S12 plays an important role in translational accuracy. In terms of biological role, located at the back of the 30S subunit body where it stabilizes the conformation of the head with respect to the body. The chain is Small ribosomal subunit protein uS5 from Anaplasma marginale (strain Florida).